A 96-amino-acid polypeptide reads, in one-letter code: ATP synthase subunit c (96 aa).

The next 2 helical transmembrane spans lie at 24–44 and 75–95; these read HVGA…VGVG and AIAE…IFVA.

Belongs to the ATPase C chain family. As to quaternary structure, F-type ATPases have 2 components, F(1) - the catalytic core - and F(0) - the membrane proton channel. F(1) has five subunits: alpha(3), beta(3), gamma(1), delta(1), epsilon(1). F(0) has three main subunits: a(1), b(2) and c(10-14). The alpha and beta chains form an alternating ring which encloses part of the gamma chain. F(1) is attached to F(0) by a central stalk formed by the gamma and epsilon chains, while a peripheral stalk is formed by the delta and b chains.

It is found in the cell membrane. Its function is as follows. F(1)F(0) ATP synthase produces ATP from ADP in the presence of a proton or sodium gradient. F-type ATPases consist of two structural domains, F(1) containing the extramembraneous catalytic core and F(0) containing the membrane proton channel, linked together by a central stalk and a peripheral stalk. During catalysis, ATP synthesis in the catalytic domain of F(1) is coupled via a rotary mechanism of the central stalk subunits to proton translocation. Functionally, key component of the F(0) channel; it plays a direct role in translocation across the membrane. A homomeric c-ring of between 10-14 subunits forms the central stalk rotor element with the F(1) delta and epsilon subunits. The sequence is that of ATP synthase subunit c from Mycoplasmoides gallisepticum (strain R(low / passage 15 / clone 2)) (Mycoplasma gallisepticum).